Consider the following 310-residue polypeptide: Very-long-chain enoyl-CoA reductase (310 aa).

The Cytoplasmic segment spans residues 1-85 (MPITIKSRSK…KDLGPQISWR (85 aa)). A helical membrane pass occupies residues 86–106 (LVFFCEYLGPVLVHSLFYYLS). The Lumenal portion of the chain corresponds to 107-141 (TIPTVVDRWHSASSDYNPFLNRVAYFLILGHYGKR). The chain crosses the membrane as a helical span at residues 142–162 (LFETLFVHQFSLATMPIFNLF). At 163 to 165 (KNC) the chain is on the cytoplasmic side. The helical transmembrane segment at 166 to 186 (FHYWVLSGLISFGYFGYGFPF) threads the bilayer. Over 187–201 (GNAKLFKYYSYLKLD) the chain is Lumenal. The helical transmembrane segment at 202-222 (DLSTLIGLFVLSELWNFYCHI) threads the bilayer. Topologically, residues 223–242 (KLRLWGDYQKKHGNAKIRVP) are cytoplasmic. A helical transmembrane segment spans residues 243 to 265 (LNQGIFNLFVAPNYTFEVWSWIW). At 266-268 (FTF) the chain is on the lumenal side. The helical transmembrane segment at 269 to 291 (VFKFNLFAVLFLTVSTAQMYAWA) threads the bilayer. Residues 292–310 (QKKNKKYHTRRAFLIPFVF) are Cytoplasmic-facing.

This sequence belongs to the steroid 5-alpha reductase family. As to quaternary structure, interacts with the fatty acid elongation system components ELO2 and ELO3. Interacts with NVJ1.

It localises to the endoplasmic reticulum membrane. The catalysed reaction is a very-long-chain 2,3-saturated fatty acyl-CoA + NADP(+) = a very-long-chain (2E)-enoyl-CoA + NADPH + H(+). It catalyses the reaction octadecanoyl-CoA + NADP(+) = (2E)-octadecenoyl-CoA + NADPH + H(+). It carries out the reaction (2E)-eicosenoyl-CoA + NADPH + H(+) = eicosanoyl-CoA + NADP(+). The enzyme catalyses (2E)-docosenoyl-CoA + NADPH + H(+) = docosanoyl-CoA + NADP(+). The catalysed reaction is (2E)-tetracosenoyl-CoA + NADPH + H(+) = tetracosanoyl-CoA + NADP(+). It catalyses the reaction (2E)-hexacosenoyl-CoA + NADPH + H(+) = hexacosanoyl-CoA + NADP(+). It participates in lipid metabolism; fatty acid biosynthesis. Functionally, catalyzes the last of the four reactions of the long-chain fatty acids elongation cycle. This endoplasmic reticulum-bound enzymatic process, allows the addition of 2 carbons to the chain of long- and very long-chain fatty acids/VLCFAs per cycle. This enzyme reduces the trans-2,3-enoyl-CoA fatty acid intermediate to an acyl-CoA that can be further elongated by entering a new cycle of elongation. Thereby, it participates in the production of VLCFAs of different chain lengths that are involved in multiple biological processes as precursors of membrane lipids and lipid mediators. VLCFAs serve for instance as precursors for ceramide and sphingolipids. Required for normal biogenesis of piecemeal microautophagy of the nucleus (PMN) bleps and vesicles during nutrient stress. The chain is Very-long-chain enoyl-CoA reductase (TSC13) from Saccharomyces cerevisiae (strain ATCC 204508 / S288c) (Baker's yeast).